Consider the following 372-residue polypeptide: Cytochrome b (372 aa).

A run of 4 helical transmembrane segments spans residues 25–45 (FGSM…FLAI), 69–90 (WIMQ…YIHI), 105–125 (WVSG…GYVL), and 170–190 (FFAL…IHVM). The heme b site is built by His-75 and His-89. Residues His-174 and His-188 each coordinate heme b. His-193 is an a ubiquinone binding site. The next 4 membrane-spanning stretches (helical) occupy residues 218–238 (YKDT…TSFF), 280–300 (LGGT…PFTH), 312–332 (MAQV…WAAT), and 339–358 (FTTI…IINP).

It belongs to the cytochrome b family. In terms of assembly, the cytochrome bc1 complex contains 3 respiratory subunits (MT-CYB, CYC1 and UQCRFS1), 2 core proteins (UQCRC1 and UQCRC2) and probably 6 low-molecular weight proteins. Heme b is required as a cofactor.

It is found in the mitochondrion inner membrane. Functionally, component of the ubiquinol-cytochrome c reductase complex (complex III or cytochrome b-c1 complex) that is part of the mitochondrial respiratory chain. The b-c1 complex mediates electron transfer from ubiquinol to cytochrome c. Contributes to the generation of a proton gradient across the mitochondrial membrane that is then used for ATP synthesis. This chain is Cytochrome b (MT-CYB), found in Heterodon simus (Southern hognose snake).